A 276-amino-acid chain; its full sequence is Diaminopimelate epimerase (276 aa).

The substrate site is built by Asn-13, Gln-46, and Asn-66. The Proton donor role is filled by Cys-75. Residues 76-77 (GN), Asn-159, Asn-192, and 210-211 (ER) contribute to the substrate site. The Proton acceptor role is filled by Cys-219. 220–221 (GT) is a substrate binding site.

This sequence belongs to the diaminopimelate epimerase family. As to quaternary structure, homodimer.

It localises to the cytoplasm. It carries out the reaction (2S,6S)-2,6-diaminopimelate = meso-2,6-diaminopimelate. The protein operates within amino-acid biosynthesis; L-lysine biosynthesis via DAP pathway; DL-2,6-diaminopimelate from LL-2,6-diaminopimelate: step 1/1. Its function is as follows. Catalyzes the stereoinversion of LL-2,6-diaminopimelate (L,L-DAP) to meso-diaminopimelate (meso-DAP), a precursor of L-lysine and an essential component of the bacterial peptidoglycan. The sequence is that of Diaminopimelate epimerase from Cellvibrio japonicus (strain Ueda107) (Pseudomonas fluorescens subsp. cellulosa).